The sequence spans 590 residues: UvrABC system protein C (590 aa).

One can recognise a GIY-YIG domain in the interval 14 to 91 (EQPGCYLMKD…IKKHDPKYNV (78 aa)). The UVR domain maps to 196–231 (EDVKRELAEKMHEAAETLEFERAKEYRDQIAAIEMT).

It belongs to the UvrC family. Interacts with UvrB in an incision complex.

Its subcellular location is the cytoplasm. Its function is as follows. The UvrABC repair system catalyzes the recognition and processing of DNA lesions. UvrC both incises the 5' and 3' sides of the lesion. The N-terminal half is responsible for the 3' incision and the C-terminal half is responsible for the 5' incision. In Geobacillus kaustophilus (strain HTA426), this protein is UvrABC system protein C.